Consider the following 940-residue polypeptide: UvrABC system protein A (940 aa).

An ATP-binding site is contributed by 32-39 (GLSGSGKS). The C4-type zinc finger occupies 252–279 (CIDCGISIDEISPRLFSFNSPFGKCDYC). 2 consecutive ABC transporter domains span residues 309–589 (WANT…EGSL) and 609–937 (SNGK…HYLK). 641 to 648 (GVSGSGKS) is an ATP binding site. The C4-type zinc finger occupies 740–766 (CEACKGDGIIKIEMQFLSDVYVPCEIC).

The protein belongs to the ABC transporter superfamily. UvrA family. In terms of assembly, forms a heterotetramer with UvrB during the search for lesions.

It is found in the cytoplasm. Functionally, the UvrABC repair system catalyzes the recognition and processing of DNA lesions. UvrA is an ATPase and a DNA-binding protein. A damage recognition complex composed of 2 UvrA and 2 UvrB subunits scans DNA for abnormalities. When the presence of a lesion has been verified by UvrB, the UvrA molecules dissociate. The sequence is that of UvrABC system protein A from Clostridium tetani (strain Massachusetts / E88).